An 833-amino-acid polypeptide reads, in one-letter code: MTRSPFRRLVFGTLRRLLYLWVRSETINQSSFTLNLDRSRPVFYALQSPSISDLAVIDTECRKAGLPRPVLSVAVGNLIEPSAYFYLTPAPDWLGRQDKRGAPPTLERLVAAVSQNPGEDAQIIPVSVFWGQSPDHESSAWKLLFADSWAVTGRLRRLVSILILGRKTRVQFSAPIHMRELVDQNKGHELTLRMSQRLLRTHFRNLKSAVIGPDVSHRRTVVKGLLDEPLVKQAIIEEAERENITQEKARERALSYGNEIASDYTYSVIRFMEVVLSWFWNKIYDGIKVSHIEGVQEIAPGHEVIYVPCHRSHIDYLLLSYLLFRNGLTPPHIAAGINLNMPVVGSLLRRGGAFFMRRTFKGSPLYTAVFTEYLHTLFTKGFPVEYFVEGGRSRTGRMLQPKTGMLAITLRSFLRNSRMPIVFIPVYIGYERVLEGRTYLGELRGATKKKESIFDIFKVIGALKQRFGQVSVNFGEPIRLAEFLDGEQPDWREQELAPQFRPDWLSETTHRLGERVAQHLNEAAAVNPMNLVAITLLSTQKLALDDQAMERVLDLYLTLLRAVPYSPHTTLPEGNGRSLIEHVKGMDLLAEQKDALGKILYLNEQNAVLMTYYRNNVLHIFALPSLLASFFQSSSRMSREQILRYTHALYPYLQSELFIRWPLSELDEVVDQWLAAFVEQGLLRFRNDAYVRPEPSSREFVLLTLLSRAIAQTLQRFYMAIALLLNSGPNTLNPEELEDLCTVMAQRLSILHGLNAPEFFDKSLFRHFIQTLLDLRVLRKDRAGKLSYHPMLGELAEGAAKRVLPAEIRLSIRQVALHSNEEEQNAGNESGAA.

The HXXXXD motif signature appears at 310-315 (HRSHID).

Belongs to the GPAT/DAPAT family.

The protein localises to the cell inner membrane. The catalysed reaction is sn-glycerol 3-phosphate + an acyl-CoA = a 1-acyl-sn-glycero-3-phosphate + CoA. It participates in phospholipid metabolism; CDP-diacylglycerol biosynthesis; CDP-diacylglycerol from sn-glycerol 3-phosphate: step 1/3. This chain is Glycerol-3-phosphate acyltransferase, found in Pseudomonas syringae pv. tomato (strain ATCC BAA-871 / DC3000).